Consider the following 724-residue polypeptide: N-alpha-acetyltransferase 35, NatC auxiliary subunit (724 aa).

It belongs to the MAK10 family. As to quaternary structure, component of the N-terminal acetyltransferase C (NatC) complex.

The protein localises to the cytoplasm. Its function is as follows. Auxillary component of the N-terminal acetyltransferase C (NatC) complex which catalyzes acetylation of N-terminal methionine residues. N-terminal acetylation protects proteins from ubiquitination and degradation by the N-end rule pathway. Regulates cell proliferation during embryonic development. This Danio rerio (Zebrafish) protein is N-alpha-acetyltransferase 35, NatC auxiliary subunit (naa35).